The primary structure comprises 107 residues: Replication restart protein PriB (107 aa).

The 100-residue stretch at 8-107 folds into the SSB domain; sequence IENRLSLIGV…LHAEHIELLD (100 aa).

This sequence belongs to the PriB family. As to quaternary structure, homodimer. Interacts with PriA and DnaT. Component of the replication restart primosome. Primosome assembly occurs via a 'hand-off' mechanism. PriA binds to replication forks, subsequently PriB then DnaT bind; DnaT then displaces ssDNA to generate the helicase loading substrate.

Its function is as follows. Involved in the restart of stalled replication forks, which reloads the replicative helicase on sites other than the origin of replication; the PriA-PriB pathway is the major replication restart pathway. During primosome assembly it facilitates complex formation between PriA and DnaT on DNA; stabilizes PriA on DNA. Stimulates the DNA unwinding activity of PriA helicase. This Actinobacillus succinogenes (strain ATCC 55618 / DSM 22257 / CCUG 43843 / 130Z) protein is Replication restart protein PriB.